Reading from the N-terminus, the 286-residue chain is Deaminated glutathione amidase (286 aa).

The 249-residue stretch at A4 to T252 folds into the CN hydrolase domain. E42 functions as the Proton acceptor in the catalytic mechanism. K115 is a catalytic residue. C157 (nucleophile) is an active-site residue.

This sequence belongs to the carbon-nitrogen hydrolase superfamily. NIT1/NIT2 family.

It carries out the reaction N-(4-oxoglutaryl)-L-cysteinylglycine + H2O = L-cysteinylglycine + 2-oxoglutarate. Its function is as follows. Hydrolyzes deaminated glutathione (dGSH, 2-oxoglutaramate) to alpha-ketoglutarate (alpha-KG) and cysteinylglycine (specific activity 6.50 umol/min/mg), has less activity against alpha-ketoglutaramate (a-KGM, specific activity 0.20 umol/min/mg), very little activity on glutathione and none on L-glutamine. May function as a metabolite repair enzyme. The sequence is that of Deaminated glutathione amidase from Yersinia enterocolitica.